Here is a 691-residue protein sequence, read N- to C-terminus: Serotransferrin-2 (691 aa).

The first 18 residues, 1 to 18 (MKLLLLSALLGCLATAYA), serve as a signal peptide directing secretion. Transferrin-like domains lie at 25-329 (VKWC…SLKK) and 340-670 (IKWC…SLRK). An intrachain disulfide couples C28 to C50. Fe(3+) is bound by residues D74 and Y104. 3 disulfides stabilise this stretch: C127–C207, C172–C186, and C235–C249. Residues T129, S134, G136, and W137 each coordinate hydrogencarbonate. N169 carries N-linked (GlcNAc...) asparagine glycosylation. Y201 lines the Fe(3+) pocket. H257 serves as a coordination point for Fe(3+). Disulfide bonds link C343-C379 and C353-C370. Residues D394 and Y428 each contribute to the Fe(3+) site. Intrachain disulfides connect C404–C682, C419–C643, C451–C530, C475–C671, C485–C499, C496–C513, and C570–C584. Residues T453, R457, A459, and G460 each contribute to the hydrogencarbonate site. Y524 is a binding site for Fe(3+). H592 serves as a coordination point for Fe(3+).

The protein belongs to the transferrin family. As to quaternary structure, monomer. Abundant in liver and serum with smaller amounts found in the stomach and kidney.

It localises to the secreted. In terms of biological role, transferrins are iron binding transport proteins which can bind two Fe(3+) ions in association with the binding of an anion, usually bicarbonate. It is responsible for the transport of iron from sites of absorption and heme degradation to those of storage and utilization. Serum transferrin may also have a further role in stimulating cell proliferation. This chain is Serotransferrin-2 (tf2), found in Salmo salar (Atlantic salmon).